The chain runs to 445 residues: tRNA-2-methylthio-N(6)-dimethylallyladenosine synthase (445 aa).

The 115-residue stretch at 7 to 121 folds into the MTTase N-terminal domain; sequence KTFYIETFGC…LPEMLVQLEA (115 aa). [4Fe-4S] cluster contacts are provided by Cys-16, Cys-52, Cys-84, Cys-158, Cys-162, and Cys-165. The 231-residue stretch at 144-374 folds into the Radical SAM core domain; it reads RDNPHRAYLT…QEKQRAIQIR (231 aa). Residues 377-443 enclose the TRAM domain; sequence AEMIGSIQEV…PNSLVGESAA (67 aa).

Belongs to the methylthiotransferase family. MiaB subfamily. Monomer. [4Fe-4S] cluster is required as a cofactor.

Its subcellular location is the cytoplasm. The enzyme catalyses N(6)-dimethylallyladenosine(37) in tRNA + (sulfur carrier)-SH + AH2 + 2 S-adenosyl-L-methionine = 2-methylsulfanyl-N(6)-dimethylallyladenosine(37) in tRNA + (sulfur carrier)-H + 5'-deoxyadenosine + L-methionine + A + S-adenosyl-L-homocysteine + 2 H(+). Its function is as follows. Catalyzes the methylthiolation of N6-(dimethylallyl)adenosine (i(6)A), leading to the formation of 2-methylthio-N6-(dimethylallyl)adenosine (ms(2)i(6)A) at position 37 in tRNAs that read codons beginning with uridine. This Solibacter usitatus (strain Ellin6076) protein is tRNA-2-methylthio-N(6)-dimethylallyladenosine synthase.